The sequence spans 1426 residues: ABC transporter G family member 31 (1426 aa).

Residues 142–415 (LRHLRIYRGG…FAGMGFRCPE (274 aa)) form the ABC transporter 1 domain. 175–182 (GPPSSGKT) contacts ATP. Positions 493–706 (ELLKSNFQWQ…AQNAISVNEF (214 aa)) constitute an ABC transmembrane type-2 1 domain. 7 helical membrane passes run 511 to 531 (FIYV…MTVF), 544 to 564 (GIIY…NGFT), 592 to 612 (LPSW…WVLV), 630 to 650 (FLLL…MASL), 655 to 675 (IVAN…GGFI), 681 to 701 (IPAW…QNAI), and 741 to 761 (IGVG…TLFL). Residues 824-1076 (MCFKNINYYV…NLVEFFEAIP (253 aa)) form the ABC transporter 2 domain. 869–876 (GVSGAGKT) is an ATP binding site. An ABC transmembrane type-2 2 domain is found at 1149–1363 (AQYAACLWKQ…TLYGLLTSQF (215 aa)). 7 helical membrane-spanning segments follow: residues 1168-1188 (YTAV…TICW), 1200-1220 (IFNA…TNAT), 1245-1265 (LPFA…QSLI), 1283-1303 (FLWY…YGMM), 1313-1333 (VAPI…GFMI), 1341-1363 (WWRW…TSQF), and 1398-1418 (VVAG…ALAI).

Belongs to the ABC transporter superfamily. ABCG family. PDR (TC 3.A.1.205) subfamily.

The protein resides in the membrane. Functionally, may be a general defense protein. The polypeptide is ABC transporter G family member 31 (Oryza sativa subsp. japonica (Rice)).